The primary structure comprises 445 residues: Chromosome partition protein MukF (445 aa).

Residues leucine 213 to isoleucine 241 form a leucine-zipper region.

It belongs to the MukF family. In terms of assembly, interacts, and probably forms a ternary complex, with MukE and MukB via its C-terminal region. The complex formation is stimulated by calcium or magnesium. It is required for an interaction between MukE and MukB.

Its subcellular location is the cytoplasm. The protein localises to the nucleoid. Involved in chromosome condensation, segregation and cell cycle progression. May participate in facilitating chromosome segregation by condensation DNA from both sides of a centrally located replisome during cell division. Not required for mini-F plasmid partitioning. Probably acts via its interaction with MukB and MukE. Overexpression results in anucleate cells. It has a calcium binding activity. This is Chromosome partition protein MukF from Vibrio cholerae serotype O1 (strain ATCC 39541 / Classical Ogawa 395 / O395).